Here is a 1555-residue protein sequence, read N- to C-terminus: Bromodomain adjacent to zinc finger domain protein 1A (1555 aa).

Positions 1-128 (MPLLHRKPFV…EETVEVIRNN (128 aa)) are required for association with the CHRAC1/POLE3 complex. Residues 1 to 128 (MPLLHRKPFV…EETVEVIRNN (128 aa)) are required for interaction with the CHRAC1-POLE3 heterodimer. Required for interaction with the CHRAC1-POLE3 heterodimer. Positions 1 to 133 (MPLLHRKPFV…VIRNNGTRLQ (133 aa)) are required for interaction with NCOR1. The WAC domain occupies 22-128 (EEVFYCKVTN…EETVEVIRNN (107 aa)). 2 positions are modified to phosphoserine: S270 and S284. One can recognise a DDT domain in the interval 422–488 (PEVFGDALMV…LTAIFQAMAE (67 aa)). Positions 635–701 (IEDYVDVLRQ…EDEQRNSAAV (67 aa)) form a coiled coil. Basic and acidic residues-rich tracts occupy residues 652–664 (LKAE…REAT) and 671–696 (RKEE…DEQR). A disordered region spans residues 652–751 (LKAEQHRKER…KRSRRGKVGQ (100 aa)). The segment at 668–935 (IRRRKEEKLK…QEKSRICAQL (268 aa)) is interaction with SMARCA5. The interval 668 to 935 (IRRRKEEKLK…QEKSRICAQL (268 aa)) is required for interaction with SMARCA5 and formation of the CHRAC ISWI chromatin remodeling complex. 2 stretches are compositionally biased toward acidic residues: residues 705–714 (GEEEREDFDT) and 728–737 (PDVVTEDEDD). A Phosphothreonine modification is found at T732. The stretch at 773–798 (SADAEEALRQEQQQKEKELLDKIQSA) forms a coiled coil. 2 disordered regions span residues 843-874 (PSSF…SSLD) and 944-969 (HFSD…CDIS). Low complexity predominate over residues 864–873 (SFLSESTSSL). K954 participates in a covalent cross-link: Glycyl lysine isopeptide (Lys-Gly) (interchain with G-Cter in SUMO2). A phosphoserine mark is found at S962 and S963. A PHD-type zinc finger spans residues 1149–1199 (NARCKICRKKGDAENMVLCDGCDRGHHTYCVRPKLKAVPDGDWFCPECRPK). Residues 1203 to 1429 (RRLSSRQRPS…LNRRSSGRQG (227 aa)) are disordered. The span at 1214-1258 (ESDEEMEEGMEDDDDEVDDDDEEGQSEEEEYEVEQDEEDSDDDEA) shows a compositional bias: acidic residues. The span at 1263 to 1277 (KRGRPQVRLPIKTKG) shows a compositional bias: basic residues. S1282 bears the Phosphoserine mark. A compositionally biased stretch (polar residues) spans 1297–1313 (SRSQQSTPKNTAKSASK). Residues S1320, S1339, S1352, S1370, S1401, S1412, and S1416 each carry the phosphoserine modification. Residues 1369 to 1386 (HSPSFTNFRVSTSRSSRQ) show a composition bias toward polar residues. The Bromo domain maps to 1429–1532 (GGVHELSAFE…AFFHIQAQKL (104 aa)). T1546 bears the Phosphothreonine mark.

Belongs to the WAL family. Component of the ACF-1 ISWI chromatin remodeling complex at least composed of SMARCA1 and BAZ1A, which regulates the spacing of histone octamers on the DNA template to facilitate access to DNA. Within the ACF-1 ISWI chromatin remodeling complex interacts with SMARCA1; the interaction is direct. Component of the ACF-5 ISWI chromatin remodeling complex (also called the ACF complex) at least composed of BAZ1A and SMARCA5/SNF2H, which regulates the spacing of histone octamers on the DNA template to facilitate access to DNA. Within the ACF-5 ISWI chromatin remodeling complex interacts with SMARCA5/SNF2H; the interaction is direct. Component of the CHRAC ISWI chromatin remodeling complex at least composed of SMARCA5/SNF2H, BAZ1A/ACF1, CHRAC1 and POLE3; the complex preferentially binds DNA through the CHRAC1-POLE3 heterodimer and possesses ATP-dependent nucleosome-remodeling activity. Within the complex interacts (via N-terminus) with POLE3-CHRAC1 heterodimer; the interaction is direct and is required for the complex to preferentially bind to DNA. Within the complex interacts with SMARCA5/SNF2H; the interaction is direct and promotes the interaction with the POLE3-CHRAC1 heterodimer. Interacts with NCOR1 (via its RD1 domain); the interaction corepresses a number of NCOR1-regulated genes.

It localises to the nucleus. Its function is as follows. Regulatory subunit of the ATP-dependent ACF-1 and ACF-5 ISWI chromatin remodeling complexes, which form ordered nucleosome arrays on chromatin and slide edge- and center-positioned histone octamers away from their original location on the DNA template to facilitate access to DNA during DNA-templated processes such as DNA replication, transcription, and repair. Both complexes regulate the spacing of nucleosomes along the chromatin and have the ability to slide mononucleosomes to the center of a DNA template in an ATP-dependent manner. The ACF-1 ISWI chromatin remodeling complex has a lower ATP hydrolysis rate than the ACF-5 ISWI chromatin remodeling complex. Has a role in sensing the length of DNA which flank nucleosomes, which modulates the nucleosome spacing activity of the ACF-5 ISWI chromatin remodeling complex. Involved in DNA replication and together with SMARCA5/SNF2H is required for replication of pericentric heterochromatin in S-phase. May have a role in nuclear receptor-mediated transcription repression. In Mus musculus (Mouse), this protein is Bromodomain adjacent to zinc finger domain protein 1A (Baz1a).